The sequence spans 559 residues: Leucine-rich repeat protein soc-2 (559 aa).

Positions 1–17 (METSKEFEFRPAKETSR) are enriched in basic and acidic residues. The segment at 1-55 (METSKEFEFRPAKETSRSKSPGGIVGRLSNFARNKARHSLSEKGSNSVGGSGGAG) is disordered. 20 LRR repeats span residues 74–95 (QDQR…IKEL), 97–118 (QLTE…IGQL), 120–142 (NLKK…ASLE), 143–164 (SLET…IYKI), 166–187 (SLET…IGNL), 189–210 (KLKM…IGKL), 212–233 (SLVV…IGDC), 235–256 (SLTQ…IGKL), 258–279 (NLVR…LESC), 281–302 (QLEE…LLTM), 305–326 (KIHT…GPQQ), 329–350 (STVT…IFSK), 353–374 (RLTK…MGSW), 376–397 (SITE…IEKL), 399–420 (NLEI…IGNL), 422–443 (KLRE…IGFL), 445–466 (HLTK…IGNL), 468–489 (SLQD…IGHL), 491–513 (SLKS…LALC), and 515–536 (SLEI…ITAG).

The protein belongs to the SHOC2 family. In terms of assembly, interacts with let-60.

Functionally, acts as a Ras effector and participates in MAPK pathway activation. Probably acts as a scaffolding protein in a protein phosphatase complex that specifically dephosphorylates Raf kinase and stimulates Raf activity at specialized signaling complexes upon Ras activation. Required for vulval development. Involved in fluid homeostasis. Plays a role in nicotinic acetylcholine receptor (nAChR)-mediated sensitivity to nicotine. This chain is Leucine-rich repeat protein soc-2 (soc-2), found in Caenorhabditis elegans.